A 312-amino-acid polypeptide reads, in one-letter code: Methionyl-tRNA formyltransferase (312 aa).

117 to 120 (SLLP) lines the (6S)-5,6,7,8-tetrahydrofolate pocket.

The protein belongs to the Fmt family.

The catalysed reaction is L-methionyl-tRNA(fMet) + (6R)-10-formyltetrahydrofolate = N-formyl-L-methionyl-tRNA(fMet) + (6S)-5,6,7,8-tetrahydrofolate + H(+). Its function is as follows. Attaches a formyl group to the free amino group of methionyl-tRNA(fMet). The formyl group appears to play a dual role in the initiator identity of N-formylmethionyl-tRNA by promoting its recognition by IF2 and preventing the misappropriation of this tRNA by the elongation apparatus. This Bordetella parapertussis (strain 12822 / ATCC BAA-587 / NCTC 13253) protein is Methionyl-tRNA formyltransferase.